A 296-amino-acid chain; its full sequence is Glutamate 5-kinase (296 aa).

An ATP-binding site is contributed by K15. Residues S55, D159, and N186 each contribute to the substrate site. Residues 206 to 207 (SD) and 248 to 254 (TGGIATK) contribute to the ATP site.

Belongs to the glutamate 5-kinase family.

It is found in the cytoplasm. It carries out the reaction L-glutamate + ATP = L-glutamyl 5-phosphate + ADP. It functions in the pathway amino-acid biosynthesis; L-proline biosynthesis; L-glutamate 5-semialdehyde from L-glutamate: step 1/2. Functionally, catalyzes the transfer of a phosphate group to glutamate to form L-glutamate 5-phosphate. The sequence is that of Glutamate 5-kinase from Treponema pallidum (strain Nichols).